We begin with the raw amino-acid sequence, 347 residues long: MEKPESEKKSAVSDVGAWAMNVISSVGIIMANKQLMSSSGFGFGFATTLTGFHFAFTALVGMVSNATGLSASKHVPLWELLWFSIVANISIAAMNFSLMLNSVGFYQISKLSMIPVVCVLEWILHSKHYCKEVKASVMVVVIGVGICTVTDVKVNAKGFICACTAVFSTSLQQISIGSLQKKYSVGSFELLSKTAPIQAISLLICGPFVDYLLSGKFISTYQMTYGAIFCILLSCALAVFCNISQYLCIGRFSATSFQVLGHMKTVCVLTLGWLLFDSEMTFKNIAGMAIAIVGMVIYSWAVDIEKQRNAKSTPHGKHSMTEDEIKLLKEGVEHIDLKDVELGDTKP.

Transmembrane regions (helical) follow at residues 11–31 (AVSD…IIMA), 43–63 (FGFA…VGMV), 80–100 (LLWF…SLML), 103–123 (VGFY…LEWI), 132–152 (EVKA…VTDV), 159–179 (FICA…IGSL), 195–215 (APIQ…LLSG), 223–243 (MTYG…FCNI), 256–276 (SFQV…WLLF), and 285–305 (IAGM…VDIE).

The protein belongs to the TPT transporter family. TPT (TC 2.A.7.9) subfamily. As to expression, widely expressed in the whole plant.

The protein localises to the golgi apparatus membrane. Its function is as follows. Nucleotide-sugar transporter that transports UDP-rhamnose or UDP-galactose and UMP in a strict counter-exchange mode. This chain is UDP-rhamnose/UDP-galactose transporter 1, found in Arabidopsis thaliana (Mouse-ear cress).